Consider the following 410-residue polypeptide: LL-diaminopimelate aminotransferase (410 aa).

Substrate contacts are provided by Tyr-15 and Gly-42. Pyridoxal 5'-phosphate is bound by residues Tyr-72, 108–109, Tyr-132, Asn-187, Tyr-218, and 246–248; these read SK and SFS. Substrate-binding residues include Lys-109, Tyr-132, and Asn-187. N6-(pyridoxal phosphate)lysine is present on Lys-249. Pyridoxal 5'-phosphate contacts are provided by Arg-257 and Asn-292. 2 residues coordinate substrate: Asn-292 and Arg-388.

This sequence belongs to the class-I pyridoxal-phosphate-dependent aminotransferase family. LL-diaminopimelate aminotransferase subfamily. Homodimer. The cofactor is pyridoxal 5'-phosphate.

It catalyses the reaction (2S,6S)-2,6-diaminopimelate + 2-oxoglutarate = (S)-2,3,4,5-tetrahydrodipicolinate + L-glutamate + H2O + H(+). Its pathway is amino-acid biosynthesis; L-lysine biosynthesis via DAP pathway; LL-2,6-diaminopimelate from (S)-tetrahydrodipicolinate (aminotransferase route): step 1/1. Involved in the synthesis of meso-diaminopimelate (m-DAP or DL-DAP), required for both lysine and peptidoglycan biosynthesis. Catalyzes the direct conversion of tetrahydrodipicolinate to LL-diaminopimelate. The chain is LL-diaminopimelate aminotransferase from Thermosynechococcus vestitus (strain NIES-2133 / IAM M-273 / BP-1).